The primary structure comprises 340 residues: 4-hydroxythreonine-4-phosphate dehydrogenase (340 aa).

Threonine 135 serves as a coordination point for substrate. Histidine 170, histidine 215, and histidine 276 together coordinate a divalent metal cation. Substrate-binding residues include lysine 284, asparagine 293, and arginine 302.

Belongs to the PdxA family. As to quaternary structure, homodimer. A divalent metal cation is required as a cofactor.

The protein resides in the cytoplasm. It carries out the reaction 4-(phosphooxy)-L-threonine + NAD(+) = 3-amino-2-oxopropyl phosphate + CO2 + NADH. It participates in cofactor biosynthesis; pyridoxine 5'-phosphate biosynthesis; pyridoxine 5'-phosphate from D-erythrose 4-phosphate: step 4/5. In terms of biological role, catalyzes the NAD(P)-dependent oxidation of 4-(phosphooxy)-L-threonine (HTP) into 2-amino-3-oxo-4-(phosphooxy)butyric acid which spontaneously decarboxylates to form 3-amino-2-oxopropyl phosphate (AHAP). The polypeptide is 4-hydroxythreonine-4-phosphate dehydrogenase (Synechococcus sp. (strain JA-2-3B'a(2-13)) (Cyanobacteria bacterium Yellowstone B-Prime)).